The chain runs to 343 residues: E3 ubiquitin-protein ligase RNF113A (343 aa).

Residue alanine 2 is modified to N-acetylalanine. The important for interaction with SNRNP200/BRR2 stretch occupies residues 2–60 (AEQLSPGKTTDQVCTFLFKKPGRKVAAGRRKRPICNQESGDSSSSSDEGNTVVRPEKKR). Serine 6 carries the post-translational modification Phosphoserine. Residues 23–34 (GRKVAAGRRKRP) are compositionally biased toward basic residues. Positions 23-95 (GRKVAAGRRK…EEEEENKSES (73 aa)) are disordered. The segment covering 39–50 (ESGDSSSSSDEG) has biased composition (low complexity). Residues 50-61 (GNTVVRPEKKRA) are important for interaction with CXCR4. Serine 84 and serine 85 each carry phosphoserine. The C3H1-type zinc finger occupies 196–224 (DYQPDICKDYKETGFCGFGDSCKFLHDRS). Serine 253 carries the post-translational modification Phosphoserine. The RING-type zinc-finger motif lies at 262–300 (CFICRQTFQNPVVTKCRHYFCESCALQHFRTTPRCYVCD). Positions 323–343 (AEGGGASGFPEDPDEDPVPIT) are disordered. The span at 333–343 (EDPDEDPVPIT) shows a compositional bias: acidic residues.

Component of pre-catalytic and catalytic spliceosome complexes. Interacts (via N-terminus) with the spliceosome subunit SNRNP200/BRR2. Component of the minor spliceosome. Within this complex, interacts with SCNM1 and CRIPT.

It localises to the nucleus. The protein resides in the nucleus speckle. The catalysed reaction is S-ubiquitinyl-[E2 ubiquitin-conjugating enzyme]-L-cysteine + [acceptor protein]-L-lysine = [E2 ubiquitin-conjugating enzyme]-L-cysteine + N(6)-ubiquitinyl-[acceptor protein]-L-lysine.. The protein operates within protein modification; protein ubiquitination. Functionally, required for pre-mRNA splicing as component of the spliceosome. As a component of the minor spliceosome, involved in the splicing of U12-type introns in pre-mRNAs. E3 ubiquitin-protein ligase that catalyzes the transfer of ubiquitin onto target proteins. Catalyzes polyubiquitination of SNRNP200/BRR2 with non-canonical 'Lys-63'-linked polyubiquitin chains. Plays a role in DNA repair via its role in the synthesis of 'Lys-63'-linked polyubiquitin chains that recruit ALKBH3 and the ASCC complex to sites of DNA damage by alkylating agents. Ubiquitinates CXCR4, leading to its degradation, and thereby contributes to the termination of CXCR4 signaling. This chain is E3 ubiquitin-protein ligase RNF113A (RNF113A), found in Bos taurus (Bovine).